A 539-amino-acid polypeptide reads, in one-letter code: Inosine-5'-monophosphate dehydrogenase (539 aa).

2 CBS domains span residues 140-196 (IIVN…DMPI) and 200-257 (MTRE…PRAC). Residues D292 and 343-345 (GIG) each bind NAD(+). K(+)-binding residues include G345 and G347. Residue S348 participates in IMP binding. Residue C350 coordinates K(+). Catalysis depends on C350, which acts as the Thioimidate intermediate. IMP-binding positions include 383-385 (DGG), 406-407 (GS), and 430-434 (YRGMG). The Proton acceptor role is filled by R446. E460 contacts IMP. The K(+) site is built by E514 and H516. The segment at 517–539 (PHDIAITQEAPNYSPDVHSGDAG) is disordered.

The protein belongs to the IMPDH/GMPR family. Homotetramer. It depends on K(+) as a cofactor.

It catalyses the reaction IMP + NAD(+) + H2O = XMP + NADH + H(+). Its pathway is purine metabolism; XMP biosynthesis via de novo pathway; XMP from IMP: step 1/1. Mycophenolic acid (MPA) is a non-competitive inhibitor that prevents formation of the closed enzyme conformation by binding to the same site as the amobile flap. In contrast, mizoribine monophosphate (MZP) is a competitive inhibitor that induces the closed conformation. MPA is a potent inhibitor of mammalian IMPDHs but a poor inhibitor of the bacterial enzymes. MZP is a more potent inhibitor of bacterial IMPDH. Its function is as follows. Catalyzes the conversion of inosine 5'-phosphate (IMP) to xanthosine 5'-phosphate (XMP), the first committed and rate-limiting step in the de novo synthesis of guanine nucleotides, and therefore plays an important role in the regulation of cell growth. The chain is Inosine-5'-monophosphate dehydrogenase from Rhodopirellula baltica (strain DSM 10527 / NCIMB 13988 / SH1).